The chain runs to 624 residues: Fibronectin type III domain-containing protein 2 (624 aa).

The first 19 residues, 1–19, serve as a signal peptide directing secretion; sequence MREQFSVLVISLLFSSSYG. 5 Fibronectin type-III domains span residues 131 to 236, 240 to 330, 334 to 430, 431 to 524, and 527 to 624; these read PPQN…TPDI, EPTN…TDVF, MPRF…TVPT, VPRE…PKRD, and VPPN…WPGR.

Prismatic layer of shell (at protein level).

The protein localises to the secreted. This Margaritifera margaritifera (Freshwater pearl mussel) protein is Fibronectin type III domain-containing protein 2.